The chain runs to 143 residues: Large ribosomal subunit protein uL11 (143 aa).

The protein belongs to the universal ribosomal protein uL11 family. Part of the ribosomal stalk of the 50S ribosomal subunit. Interacts with L10 and the large rRNA to form the base of the stalk. L10 forms an elongated spine to which L12 dimers bind in a sequential fashion forming a multimeric L10(L12)X complex. In terms of processing, one or more lysine residues are methylated.

Functionally, forms part of the ribosomal stalk which helps the ribosome interact with GTP-bound translation factors. The protein is Large ribosomal subunit protein uL11 of Polynucleobacter asymbioticus (strain DSM 18221 / CIP 109841 / QLW-P1DMWA-1) (Polynucleobacter necessarius subsp. asymbioticus).